The primary structure comprises 148 residues: Snaclec 2 (148 aa).

A signal peptide spans 1–23 (MGRFIFVSFGLLVVFLSLSGTEA). 3 disulfide bridges follow: Cys27/Cys38, Cys55/Cys144, and Cys121/Cys136. Residues 34–145 (YDQNCYKAFE…CSGTHSFVCK (112 aa)) form the C-type lectin domain.

The protein belongs to the snaclec family. As to quaternary structure, heterodimer; disulfide-linked. As to expression, expressed by the venom gland.

The protein resides in the secreted. Its function is as follows. Interferes with one step of hemostasis (modulation of platelet aggregation, or coagulation cascade, for example). This Echis ocellatus (Ocellated saw-scaled viper) protein is Snaclec 2.